A 1214-amino-acid chain; its full sequence is Delta-latroinsectotoxin-Lt1a (1214 aa).

Positions 64 to 89 (IGSIPVIGEVVGIVTAPIAIVSHITS) are helix H2 is the probable transmembrane region of the tetrameric pore inserted in the target cell membrane. The segment at 250-269 (ALYALFYGTQTYAAVMFFLL) is helix H8 is the probable transmembrane region of the tetrameric pore inserted in the target cell membrane. ANK repeat units follow at residues 464–497 (DIHR…DIEA), 501–532 (NDRS…DIEL), 536–565 (NGFT…DVNA), 570–600 (TNLT…KVNE), 604–633 (DGFT…DKNA), 637–666 (SGLT…DLNI), 670–699 (NHMA…KVSI), 706–734 (NNWT…DINL), 740–769 (GNLT…NIEE), 773–802 (EGYT…DIEA), 806–835 (DNLT…DIGA), 839–868 (DGST…NLKE), 872–901 (NKYL…SLKD), 906–936 (EGRT…TLDE), and 966–994 (VKPT…PEGS). Positions 1020–1214 (IVKETNSRYL…IDVHQKMFLR (195 aa)) are cleaved as a propeptide — C-terminal domain cleavage is required for toxin activation.

This sequence belongs to the cationic peptide 01 (latrotoxin) family. 04 (delta-latroinsectotoxin) subfamily. In terms of assembly, homotetramer in membrane. As to expression, expressed by the venom gland.

Its subcellular location is the secreted. It localises to the target cell membrane. Its function is as follows. Insecticidal presynaptic neurotoxin that induces massive neurotransmitter release at insect (but not vertebrate) neuromuscular junctions. Native toxin forms cation-permeable pores (with high permeability to calcium) in lipid membranes locust muscle membrane and artificial lipid bilayers. May bind to insect neurexin-1 homolog, insect adhesion G protein-coupled receptor L1 homolog, and insect receptor-type tyrosine-protein phosphatase S homolog, and induces neurotransmitter exocytosis both by forming tetrameric pores in membranes and signaling via G protein-coupled receptor. Oligomerization is a process independent of divalent cations. This Latrodectus tredecimguttatus (Mediterranean black widow spider) protein is Delta-latroinsectotoxin-Lt1a.